The sequence spans 555 residues: MSEAEARPTNFIRQIIDEDLENGKHSMVHTRFPPEPNGYLHIGHAKSICLNFGIAQDYKGQCNLRFDDTNPVKEDLEFVESIKRDVQWLGFQWSGEVRYSSDYFEQLHNYAVELIGKGLAYVDELSPEQIREYRGSLTSAGKNSPYRDRSVAENLELFAKMRNGEFAEGTACLRAKIDMASNFIVLRDPVIYRIKFADHHQTGNRWCIYPMYDFTHCISDALEGITHSLCTLEFQDNRRLYDWVLDNITIPVHPRQYEFSRLNLEYAIMSKRKLNLLVTEKVVEGWDDPRMLTVSGLRRRGYSAGSIREFCRRIGVTKQDNIVEMAALESCIRDDLNENAPRAMAVLDAVKVVIENLPAHHEQTICMPNHPNRPEMGTRQVPFSREIYIDRADFREEANKHYKRLVLGKEVRLRNAYVIKAERIAKDEEGNITCLFCSCDIDTLSKDPADGRKVKGVIHWVSAEHALLAEFRLYDRLFSVPNPAAAEDFLTTINPESLVIRQGFVEPGMQQALASAPYQFEREGYFCADSVYSTSNKLVFNRTVGLRDTWAKNGE.

The short motif at 34–44 is the 'HIGH' region element; the sequence is PEPNGYLHIGH. ATP is bound by residues 35-37 and 41-47; these read EPN and HIGHAKS. Residues Asp-67 and Tyr-212 each contribute to the L-glutamine site. ATP-binding positions include Thr-231, 261 to 262, and 269 to 271; these read RL and MSK. Residues 268-272 carry the 'KMSKS' region motif; sequence IMSKR.

It belongs to the class-I aminoacyl-tRNA synthetase family. As to quaternary structure, monomer.

It is found in the cytoplasm. It carries out the reaction tRNA(Gln) + L-glutamine + ATP = L-glutaminyl-tRNA(Gln) + AMP + diphosphate. This is Glutamine--tRNA ligase from Erwinia tasmaniensis (strain DSM 17950 / CFBP 7177 / CIP 109463 / NCPPB 4357 / Et1/99).